A 268-amino-acid polypeptide reads, in one-letter code: Embryonic abundant protein USP92 (268 aa).

An N-terminal signal peptide occupies residues 1-22; sequence MEFAHLTVLSLFCLAFVGITAT. 5 tandem repeats follow at residues 50–55, 83–88, 101–106, 166–183, and 202–222. The segment at 50–106 is 3 X 6 AA approximate repeats; sequence GKTNSLPIKSEELKQYSTLFFEHDLHPRKNFILGNTNSVGSIIRPFTKSRQGVTDSI. In terms of domain architecture, BURP spans 68–259; the sequence is LFFEHDLHPR…GNKAAAWVPN (192 aa). The segment at 166 to 222 is 2 X approximate repeats; it reads YVVEDVKKVGDNAVMCHRLNFEKVVFNCHQVRETTAYVVSLVASDGTKTKALTVCHH. An N-linked (GlcNAc...) asparagine glycan is attached at Asn-259.

As to expression, seed.

The sequence is that of Embryonic abundant protein USP92 from Vicia faba (Broad bean).